Consider the following 206-residue polypeptide: N-(5'-phosphoribosyl)anthranilate isomerase (206 aa).

It belongs to the TrpF family.

It carries out the reaction N-(5-phospho-beta-D-ribosyl)anthranilate = 1-(2-carboxyphenylamino)-1-deoxy-D-ribulose 5-phosphate. Its pathway is amino-acid biosynthesis; L-tryptophan biosynthesis; L-tryptophan from chorismate: step 3/5. The protein is N-(5'-phosphoribosyl)anthranilate isomerase of Pseudomonas putida (strain ATCC 700007 / DSM 6899 / JCM 31910 / BCRC 17059 / LMG 24140 / F1).